Here is a 1041-residue protein sequence, read N- to C-terminus: Cullin-associated NEDD8-dissociated protein 1, C-terminal part (1041 aa).

Disordered stretches follow at residues 1 to 24 (MSSD…ELRE) and 64 to 103 (DMGE…EGGY). Residues 9 to 24 (YSHDDEHDPQTDELRE) are compositionally biased toward basic and acidic residues. Residues 65 to 103 (MGEDEEMSGTQDDGSEDDVTEEPDLEDDDFEDFEEEGGY) are compositionally biased toward acidic residues. Residues 138–176 (SLYQQIAPAIVARFNKEREESVKLELVSTMDALVRKTAE) form an HEAT 1 repeat. A disordered region spans residues 189–237 (SVGSGSKISRKRRRQDSDASMIDFEPSMGTSSAAGTPLAAPSSPQSGPQ). Low complexity predominate over residues 225–237 (PLAAPSSPQSGPQ). HEAT repeat units follow at residues 242 to 279 (NALP…VRYG), 339 to 376 (PFLI…ALTP), 434 to 472 (LSFE…LCSR), 479 to 516 (NWVR…NPNT), 525 to 560 (MKNL…GNAQ), 598 to 637 (GSGL…NVGV), 670 to 708 (GASC…GNVK), 710 to 744 (YLPT…MVRR), 780 to 817 (LDPP…DSRD), and 822 to 867 (VLRP…HLGE).

This sequence belongs to the CAND family. As to quaternary structure, interacts with candA-N. Interacts with unneddylated cullins culA and culD.

Its subcellular location is the nucleus. Assembly factor of SCF (SKP1-CUL1-F-box protein) E3 ubiquitin ligase complexes that promotes the exchange of the substrate-recognition F-box subunit in SCF complexes, thereby playing a key role in the cellular repertoire of SCF complexes. Acts as a F-box protein exchange factor when interacting with candA-N. This is Cullin-associated NEDD8-dissociated protein 1, C-terminal part (candA-C) from Emericella nidulans (strain FGSC A4 / ATCC 38163 / CBS 112.46 / NRRL 194 / M139) (Aspergillus nidulans).